Reading from the N-terminus, the 174-residue chain is Interferon gamma (174 aa).

Residues 1–23 (MNSTRCILALLLCLTQAMSGCYG) form the signal peptide. At Q24 the chain carries Pyrrolidone carboxylic acid. Residues N39 and N106 are each glycosylated (N-linked (GlcNAc...) asparagine).

This sequence belongs to the type II (or gamma) interferon family. Homodimer. Interacts with IFNGR1 (via extracellular domain); this interaction promotes IFNGR1 dimerization. In terms of tissue distribution, released primarily from activated T lymphocytes.

It is found in the secreted. Type II interferon produced by immune cells such as T-cells and NK cells that plays crucial roles in antimicrobial, antiviral, and antitumor responses by activating effector immune cells and enhancing antigen presentation. Primarily signals through the JAK-STAT pathway after interaction with its receptor IFNGR1 to affect gene regulation. Upon IFNG binding, IFNGR1 intracellular domain opens out to allow association of downstream signaling components JAK2, JAK1 and STAT1, leading to STAT1 activation, nuclear translocation and transcription of IFNG-regulated genes. Many of the induced genes are transcription factors such as IRF1 that are able to further drive regulation of a next wave of transcription. Plays a role in class I antigen presentation pathway by inducing a replacement of catalytic proteasome subunits with immunoproteasome subunits. In turn, increases the quantity, quality, and repertoire of peptides for class I MHC loading. Increases the efficiency of peptide generation also by inducing the expression of activator PA28 that associates with the proteasome and alters its proteolytic cleavage preference. Up-regulates as well MHC II complexes on the cell surface by promoting expression of several key molecules such as cathepsins B/CTSB, H/CTSH, and L/CTSL. Participates in the regulation of hematopoietic stem cells during development and under homeostatic conditions by affecting their development, quiescence, and differentiation. This chain is Interferon gamma (IFNG), found in Phodopus sungorus (Striped hairy-footed hamster).